The following is a 296-amino-acid chain: MDHKNYLNHVIRGIYNDFQFLVDEGVVERSALDWVHANIHLQDGPASPVTAPAAQPVESSVPLPLPKRKSSVEKRAGSVASAVAAMSLSQNSGEKRTPEEPRKLPGVPAPQKQSEASSVNSSTEKLPPPPSYPGPNTAHKNVERVLAMYDFPGPDAGDLGFHAGEVIIVLEHVNNDWWRGELNGKEGIFPSNYVRLLEDSAVKAQPPPPPPQQNYPPAASSSAPPMQYQQTAYPPQQAPYPPVQAYPQAPQQPIVVAQPTEHKHSSTFKKIGSGLGSAFVFGAGATAGADLVNSIF.

The disordered stretch occupies residues 46 to 138; sequence ASPVTAPAAQ…PPSYPGPNTA (93 aa). Over residues 93–103 the composition is skewed to basic and acidic residues; it reads GEKRTPEEPRK. Residues 111 to 124 show a composition bias toward polar residues; the sequence is QKQSEASSVNSSTE. The region spanning 140 to 199 is the SH3 domain; that stretch reads KNVERVLAMYDFPGPDAGDLGFHAGEVIIVLEHVNNDWWRGELNGKEGIFPSNYVRLLED. The interval 202–246 is disordered; that stretch reads VKAQPPPPPPQQNYPPAASSSAPPMQYQQTAYPPQQAPYPPVQAY. The segment covering 205-214 has biased composition (pro residues); it reads QPPPPPPQQN. A compositionally biased stretch (low complexity) spans 215–235; the sequence is YPPAASSSAPPMQYQQTAYPP.

In Schizosaccharomyces pombe (strain 972 / ATCC 24843) (Fission yeast), this protein is Protein csh3 (csh3).